The chain runs to 163 residues: Glutathione peroxidase-like peroxiredoxin HYR1 (163 aa).

Catalysis depends on Cys-36, which acts as the Cysteine sulfenic acid (-SOH) intermediate. A disulfide bond links Cys-36 and Cys-82.

This sequence belongs to the glutathione peroxidase family. In terms of assembly, interacts with YAP1 and probably YBP1.

It is found in the cytoplasm. The protein localises to the mitochondrion intermembrane space. The protein resides in the peroxisome matrix. The catalysed reaction is a hydroperoxide + [thioredoxin]-dithiol = an alcohol + [thioredoxin]-disulfide + H2O. In terms of biological role, involved in oxidative stress response and redox homeostasis. Functions as a sensor and transducer of hydroperoxide stress. In response to hydroperoxide stress it oxidizes (activates) the transcription activator YAP1, which is involved in transcription activation of genes of the oxidative stress response pathway. May also play a direct role in hydroperoxide scavenging, being the most active of three closely related S.cerevisiae peroxiredoxins (GPX1, GPX2, and HYR1/GPX3) with respect to peroxide and lipid hydroperoxide reduction. The three enzymes are not required for the glutaredoxin-mediated antioxidant function. In the presence of peroxides, HYR1/GPX3 is directly oxidized at Cys-36 to form a cysteine sulfenic acid (-SOH). Cys-36-SOH then forms either an intramolecular disulfide bond (Cys-36 with Cys-82) or a transient, intermolecular disulfide bond with 'Cys-598' of YAP1, which is further resolved into a YAP1 intramolecular disulfide bond ('Cys-303' with 'Cys-598'), which causes its nuclear accumulation and activation, and a reduced Cys-36 in HYR1/GPX3. The protein is Glutathione peroxidase-like peroxiredoxin HYR1 of Saccharomyces cerevisiae (strain ATCC 204508 / S288c) (Baker's yeast).